The chain runs to 377 residues: Protein RecA (377 aa).

Residue 65 to 72 participates in ATP binding; it reads GPESSGKT. The disordered stretch occupies residues 329–377; the sequence is GDEEAAATKATETKTDAPKDKDKGKTKAKDKPADVTPGQIELAPDKSAK. The segment covering 339–361 has biased composition (basic and acidic residues); the sequence is TETKTDAPKDKDKGKTKAKDKPA.

The protein belongs to the RecA family.

The protein resides in the cytoplasm. Can catalyze the hydrolysis of ATP in the presence of single-stranded DNA, the ATP-dependent uptake of single-stranded DNA by duplex DNA, and the ATP-dependent hybridization of homologous single-stranded DNAs. It interacts with LexA causing its activation and leading to its autocatalytic cleavage. The protein is Protein RecA of Levilactobacillus brevis (strain ATCC 367 / BCRC 12310 / CIP 105137 / JCM 1170 / LMG 11437 / NCIMB 947 / NCTC 947) (Lactobacillus brevis).